The following is a 102-amino-acid chain: Large ribosomal subunit protein bL21 (102 aa).

It belongs to the bacterial ribosomal protein bL21 family. As to quaternary structure, part of the 50S ribosomal subunit. Contacts protein L20.

Functionally, this protein binds to 23S rRNA in the presence of protein L20. This Sorangium cellulosum (strain So ce56) (Polyangium cellulosum (strain So ce56)) protein is Large ribosomal subunit protein bL21.